The chain runs to 156 residues: ATP synthase subunit b 1 (156 aa).

The helical transmembrane segment at 7-27 (LFLQAIVFAILVWFTMKFVWP) threads the bilayer.

This sequence belongs to the ATPase B chain family. As to quaternary structure, F-type ATPases have 2 components, F(1) - the catalytic core - and F(0) - the membrane proton channel. F(1) has five subunits: alpha(3), beta(3), gamma(1), delta(1), epsilon(1). F(0) has three main subunits: a(1), b(2) and c(10-14). The alpha and beta chains form an alternating ring which encloses part of the gamma chain. F(1) is attached to F(0) by a central stalk formed by the gamma and epsilon chains, while a peripheral stalk is formed by the delta and b chains.

It is found in the cell inner membrane. F(1)F(0) ATP synthase produces ATP from ADP in the presence of a proton or sodium gradient. F-type ATPases consist of two structural domains, F(1) containing the extramembraneous catalytic core and F(0) containing the membrane proton channel, linked together by a central stalk and a peripheral stalk. During catalysis, ATP synthesis in the catalytic domain of F(1) is coupled via a rotary mechanism of the central stalk subunits to proton translocation. Functionally, component of the F(0) channel, it forms part of the peripheral stalk, linking F(1) to F(0). The polypeptide is ATP synthase subunit b 1 (Albidiferax ferrireducens (strain ATCC BAA-621 / DSM 15236 / T118) (Rhodoferax ferrireducens)).